The following is a 376-amino-acid chain: UDP-4-amino-4,6-dideoxy-N-acetyl-beta-L-altrosamine transaminase (376 aa).

Residues tyrosine 4, 24–27, alanine 54, and serine 176 each bind substrate; that span reads EILT. Residue lysine 181 is modified to N6-(pyridoxal phosphate)lysine. Substrate contacts are provided by residues asparagine 226 and 311–314; that span reads QVHY.

Belongs to the DegT/DnrJ/EryC1 family.

The catalysed reaction is UDP-4-amino-4,6-dideoxy-N-acetyl-beta-L-altrosamine + 2-oxoglutarate = UDP-2-acetamido-2,6-dideoxy-beta-L-arabino-hex-4-ulose + L-glutamate. Its function is as follows. Catalyzes the second step in the biosynthesis of pseudaminic acid, a sialic-acid-like sugar that is used to modify flagellin. Uses UDP-2-acetamido-2,6-dideoxy-beta-L-arabino-4-hexulose as substrate producing UDP-4-amino-4,6-dideoxy-beta-L-AltNAc. In Campylobacter jejuni subsp. jejuni serotype O:2 (strain ATCC 700819 / NCTC 11168), this protein is UDP-4-amino-4,6-dideoxy-N-acetyl-beta-L-altrosamine transaminase (pseC).